Reading from the N-terminus, the 553-residue chain is Mannuronan C5-epimerase AlgE4 (553 aa).

PbH1 repeat units follow at residues Asp-133 to Glu-155, Thr-157 to Tyr-179, Leu-180 to Thr-202, Thr-204 to Arg-226, Pro-234 to Met-256, Thr-257 to Gly-279, Ala-280 to Glu-301, and Thr-320 to Glu-342. Residues Tyr-367 to Asp-427 form a disordered region. 2 Hemolysin-type calcium-binding repeats span residues Gln-403–Leu-420 and Asp-421–Phe-438.

This sequence belongs to the D-mannuronate C5-epimerase family. Ca(2+) serves as cofactor.

Its subcellular location is the secreted. The catalysed reaction is [(1-&gt;4)-beta-D-mannuronosyl](n) = [alginate](n). It functions in the pathway glycan biosynthesis; alginate biosynthesis. Inhibited by zinc. Converts beta-D-mannuronic acid (M) to alpha-L-guluronic acid (G), but introduces almost exclusively MG blocks, producing a polymer with non-gel-forming capacity. This chain is Mannuronan C5-epimerase AlgE4, found in Azotobacter vinelandii.